A 112-amino-acid polypeptide reads, in one-letter code: Large ribosomal subunit protein P2-B (112 aa).

The tract at residues 89-112 is disordered; sequence APAAADAKKEEEEEDDDMGFGLFD.

This sequence belongs to the eukaryotic ribosomal protein P1/P2 family. As to quaternary structure, P1 and P2 exist as dimers at the large ribosomal subunit. In terms of processing, phosphorylated.

In terms of biological role, plays an important role in the elongation step of protein synthesis. This Trypanosoma cruzi protein is Large ribosomal subunit protein P2-B.